The sequence spans 660 residues: Septation initiation protein sid4 (660 aa).

3 disordered regions span residues 79 to 243 (TKKE…QQHF), 368 to 396 (STTVSTPLCPPKRFPKSTKDFKEQKPDTK), and 459 to 503 (RHTS…PAKN). Polar residues-rich tracts occupy residues 125-138 (SFNSEKASYTSTPY), 156-176 (SNSPSFPPSQSHTSSYDQSPK), and 222-243 (RPNQYNPEPNFSLSSGYPQQHF). Over residues 384–396 (STKDFKEQKPDTK) the composition is skewed to basic and acidic residues. 2 stretches are compositionally biased toward polar residues: residues 459 to 480 (RHTSQNGDQESNESSKNAITTK) and 488 to 497 (KENTMLNDGS).

Homodimer. Interacts with cdc11, sad1, plo1 and dma1.

The protein resides in the cytoplasm. The protein localises to the cytoskeleton. It localises to the microtubule organizing center. It is found in the spindle pole body. Its function is as follows. Required for activation of the spg1 GTPase signaling cascade which leads to the initiation of septation and the subsequent termination of mitosis. May act as a scaffold at the spindle pole body to which other components of the spg1 signaling cascade attach. This chain is Septation initiation protein sid4 (sid4), found in Schizosaccharomyces pombe (strain 972 / ATCC 24843) (Fission yeast).